Consider the following 233-residue polypeptide: 4'-phosphopantetheinyl transferase psf-1 (233 aa).

3 residues coordinate Mg(2+): aspartate 110, glutamate 112, and glutamate 154. The segment at 161 to 192 (GKGISYGLSSFTARLSEDGQATLRLPDHEAPC) is peptidyl carrier protein binding.

The protein belongs to the P-Pant transferase superfamily. Gsp/Sfp/HetI/AcpT family. Requires Mg(2+) as cofactor.

It catalyses the reaction apo-[peptidyl-carrier protein] + CoA = holo-[peptidyl-carrier protein] + adenosine 3',5'-bisphosphate + H(+). Its function is as follows. Probably activates the peptidyl carrier protein (PCP) domains of surfactin synthetase by transferring the 4'-phosphopantetheinyl moiety of coenzyme A (CoA) to a serine residue. Required for the production of the lipopeptide antibiotic, surfactin. The chain is 4'-phosphopantetheinyl transferase psf-1 (psf-1) from Bacillus pumilus (Bacillus mesentericus).